The sequence spans 119 residues: Beta-2-microglobulin (119 aa).

The first 20 residues, 1–20 (MARFVVVALLVLLSLSGLEA), serve as a signal peptide directing secretion. The 90-residue stretch at 25-114 (PKIQVYSRHP…VTLSTPKTVK (90 aa)) folds into the Ig-like C1-type domain. Residues cysteine 45 and cysteine 100 are joined by a disulfide bond.

This sequence belongs to the beta-2-microglobulin family. Heterodimer of an alpha chain and a beta chain. Beta-2-microglobulin is the beta-chain of major histocompatibility complex class I molecules.

The protein resides in the secreted. Component of the class I major histocompatibility complex (MHC). Involved in the presentation of peptide antigens to the immune system. This chain is Beta-2-microglobulin (B2M), found in Aotus lemurinus (Gray-bellied night monkey).